Consider the following 351-residue polypeptide: MPGAAAKGSELSERIEGFVETLKRGGGQRSSEDMARETLGLLRRLITDHHWNNAGDLMDLIRREGRRMTAAQPSETTVGNMVRRVLKIIREEYGRLHGRSDESDQQESLHKLLTSGGLSEDFSFHFAPLKANIIEAINELLVELEGTMENIAAQALEHIHSNEVIMTIGYSRTVEAFLKEAARKRKFHVIVAECAPFCQGHEMAVNLSKEGIETTVMTDAAIFAVMSRVNKVIIGTKTILANGSLRAVAGTHTLALAAKHHSTPLIVCAPMFKLSPQFPSEEDSFHKFVAPEEVLPFTEGDILEKVSVHCPVFDYVPPDLITLFISNIGGNAPSYIYRLMSELYHPDDHVL.

This sequence belongs to the eIF-2B alpha/beta/delta subunits family. As to quaternary structure, component of the translation initiation factor 2B (eIF2B) complex which is a heterodecamer of two sets of five different subunits: alpha, beta, gamma, delta and epsilon. Subunits alpha, beta and delta comprise a regulatory subcomplex and subunits epsilon and gamma comprise a catalytic subcomplex. Within the complex, the hexameric regulatory complex resides at the center, with the two heterodimeric catalytic subcomplexes bound on opposite sides.

It localises to the cytoplasm. The protein localises to the cytosol. Activated by the chemical integrated stress response (ISR) inhibitor ISRIB which stimulates guanine nucleotide exchange factor activity for both phosphorylated and unphosphorylated eIF2. In terms of biological role, acts as a component of the translation initiation factor 2B (eIF2B) complex, which catalyzes the exchange of GDP for GTP on eukaryotic initiation factor 2 (eIF2) gamma subunit. Its guanine nucleotide exchange factor activity is repressed when bound to eIF2 complex phosphorylated on the alpha subunit, thereby limiting the amount of methionyl-initiator methionine tRNA available to the ribosome and consequently global translation is repressed. The polypeptide is Translation initiation factor eIF2B subunit beta (Eif2b2) (Mus musculus (Mouse)).